The following is a 527-amino-acid chain: Catalase (527 aa).

Over residues 1 to 22 (MSDSRDPASDQMKQWKEQRASQ) the composition is skewed to basic and acidic residues. The disordered stretch occupies residues 1–34 (MSDSRDPASDQMKQWKEQRASQRPDVLTTGGGNP). An N-acetylserine modification is found at serine 2. Phosphoserine is present on serine 9. At lysine 13 the chain carries N6-succinyllysine. Residue serine 21 is modified to Phosphoserine. Active-site residues include histidine 75 and asparagine 148. Residues histidine 194, serine 201, arginine 203, and asparagine 213 each contribute to the NADP(+) site. Residue lysine 221 is modified to N6-succinyllysine. An N6-acetyllysine modification is found at lysine 233. Residues lysine 237, tryptophan 303, histidine 305, and lysine 306 each contribute to the NADP(+) site. Lysine 306 carries the N6-acetyllysine; alternate modification. Lysine 306 is subject to N6-succinyllysine; alternate. Tyrosine 358 contributes to the heme binding site. 2 positions are modified to phosphoserine: serine 417 and serine 422. Lysine 430 is subject to N6-acetyllysine; alternate. Residue lysine 430 is modified to N6-succinyllysine; alternate. Position 434 is a phosphoserine (serine 434). Residues lysine 449 and lysine 480 each carry the N6-acetyllysine; alternate modification. Residues lysine 449 and lysine 480 each carry the N6-succinyllysine; alternate modification. At lysine 499 the chain carries N6-acetyllysine. Position 511 is a phosphothreonine (threonine 511). Position 517 is a phosphoserine (serine 517). Lysine 522 carries the N6-succinyllysine modification. Residues 524–527 (KANL) carry the Microbody targeting signal; atypical motif.

This sequence belongs to the catalase family. Homotetramer. Interacts (via microbody targeting signal) with PEX5, monomeric form interacts with PEX5, leading to its translocation into peroxisomes. Requires heme as cofactor. The cofactor is NADP(+).

It is found in the peroxisome matrix. The catalysed reaction is 2 H2O2 = O2 + 2 H2O. In terms of biological role, catalyzes the degradation of hydrogen peroxide (H(2)O(2)) generated by peroxisomal oxidases to water and oxygen, thereby protecting cells from the toxic effects of hydrogen peroxide. Promotes growth of cells including T-cells, B-cells, myeloid leukemia cells, melanoma cells, mastocytoma cells and normal and transformed fibroblast cells. This chain is Catalase (Cat), found in Mus musculus (Mouse).